Consider the following 543-residue polypeptide: Ribonuclease Y (543 aa).

The chain crosses the membrane as a helical span at residues 4–24 (IIMIPVATAIVSLLVGTVTGY). Positions 233 to 296 (TVSVVDLPNE…EIAKRAMERL (64 aa)) constitute a KH domain. The region spanning 359-452 (VLSHSIEVGK…VVAADTISSA (94 aa)) is the HD domain.

The protein belongs to the RNase Y family.

It localises to the cell membrane. Functionally, endoribonuclease that initiates mRNA decay. In Lactobacillus acidophilus (strain ATCC 700396 / NCK56 / N2 / NCFM), this protein is Ribonuclease Y.